We begin with the raw amino-acid sequence, 208 residues long: Methylthioribulose-1-phosphate dehydratase (208 aa).

Positions 98 and 100 each coordinate Zn(2+).

This sequence belongs to the aldolase class II family. MtnB subfamily. It depends on Zn(2+) as a cofactor.

It catalyses the reaction 5-(methylsulfanyl)-D-ribulose 1-phosphate = 5-methylsulfanyl-2,3-dioxopentyl phosphate + H2O. Its pathway is amino-acid biosynthesis; L-methionine biosynthesis via salvage pathway; L-methionine from S-methyl-5-thio-alpha-D-ribose 1-phosphate: step 2/6. In terms of biological role, catalyzes the dehydration of methylthioribulose-1-phosphate (MTRu-1-P) into 2,3-diketo-5-methylthiopentyl-1-phosphate (DK-MTP-1-P). The sequence is that of Methylthioribulose-1-phosphate dehydratase from Hahella chejuensis (strain KCTC 2396).